The chain runs to 312 residues: Putative olfactory receptor 1F2 (312 aa).

The Extracellular segment spans residues 1–25 (MERDKPVSVSEFLLLGLSRQPQQQH). A helical membrane pass occupies residues 26–49 (LLFVFFLSMYLATVLGNLLIILAI). Over 50–57 (SIDSRLHT) the chain is Cytoplasmic. A helical transmembrane segment spans residues 58–78 (PMYFFLSNMSFVDNCFSTTVP). Residues 79–99 (KMLANHILRTQTISFSGCLMQ) lie on the Extracellular side of the membrane. A disulfide bridge connects residues cysteine 96 and cysteine 188. A helical transmembrane segment spans residues 100–119 (MYFISELADMDNFLLAVMAY). Residues 120 to 138 (DRFVAVCRPLHYTAKMIHQ) lie on the Cytoplasmic side of the membrane. A helical membrane pass occupies residues 139 to 157 (LCALLVTGSWVVANSNALL). Residues 158 to 195 (HTLLMARLSFCADNTIPHIFCDVTPLLKLSCSDTHLSE) are Extracellular-facing. Residues 196–218 (VMILTEAALVTITPFLCLLASYM) traverse the membrane as a helical segment. The Cytoplasmic portion of the chain corresponds to 219–235 (HITCVVLRVPSTKGRWK). The chain crosses the membrane as a helical span at residues 236 to 258 (AFSTCGSHLAVVLLFYGTIMSPY). The Extracellular portion of the chain corresponds to 259 to 271 (FRTSSSHSAQRDI). The helical transmembrane segment at 272-291 (AAAVRFTVVTPVMNPLIYSL) threads the bilayer. Over 292-312 (RNKDIKGALVKVVAVKFFSVQ) the chain is Cytoplasmic.

The protein belongs to the G-protein coupled receptor 1 family.

The protein resides in the cell membrane. In terms of biological role, odorant receptor. The protein is Putative olfactory receptor 1F2 (OR1F2P) of Homo sapiens (Human).